Here is a 623-residue protein sequence, read N- to C-terminus: MEGYHKPDQQKLQALKDTANRLRISSIQATTAAGSGHPTSCCSAAEIMAVLFFHTMRYKSQDPRNPHNDRFVLSKGHAAPILYAVWAEAGFLPEAELLNLRKISSDLDGHPVPKQAFTDVATGSLGQGLGVACGMAYTGKYFDKASYRVYCLLGDGELSEGSVWEAMAFASIYKLDNLVAILDINRLGQSDPAPLQHQMDIYQKRCEAFGWHAVIVDGHSVEELCKAFGQAKHQPTAIIAKTFKGRGITGVEDKESWHGKPLPKNMAEQIIQEIYSQIQSKKKILATPPQEDAPSVDIANIRMPSLPSYKVGDKIATRKAYGQALAKLGHASDRIIALDGDTKNPTFSEIFKKEHPDRFIECYIAEQNMVSIAVGCATRNRTVPFCSTFAAFFTRAFDQIRMAAISESNINLCGSHCGVSIGEDGPSQMALENLAMFRSVPTSTVFYPSDGVVTEKAVELAANTKGICFIRTSRPENAIIYNNNEDFQVGQAKVVLKSKDDQVTVIGAGVTLHEALAAAELLKKEKINIRVLDPFTIKPLDRKLILDSARATKGRILTVEDHYYEGGIGEAVSSAVVGEPGITVTHLAVNRVPRSGKPAELLKMFGIDKDAIAQAVRGLITKA.

Methionine 1 carries the N-acetylmethionine modification. An N6-acetyllysine mark is found at lysine 6 and lysine 11. Histidine 37 is a substrate binding site. Serine 40 and histidine 77 together coordinate thiamine diphosphate. Serine 104 bears the Phosphoserine mark. Residue 123–125 (GSL) coordinates thiamine diphosphate. The residue at position 144 (lysine 144) is an N6-acetyllysine. Aspartate 155 is a Mg(2+) binding site. Residues glycine 156 and asparagine 185 each coordinate thiamine diphosphate. Positions 185 and 187 each coordinate Mg(2+). Residues lysine 204, lysine 232, and lysine 241 each carry the N6-acetyllysine modification. Thiamine diphosphate contacts are provided by lysine 244 and histidine 258. Histidine 258 contributes to the substrate binding site. Residue lysine 260 is modified to N6-acetyllysine. At tyrosine 275 the chain carries Phosphotyrosine. Threonine 287 carries the post-translational modification Phosphothreonine. Serine 295 carries the post-translational modification Phosphoserine. Arginine 318 contributes to the substrate binding site. Lysine 352 participates in a covalent cross-link: Glycyl lysine isopeptide (Lys-Gly) (interchain with G-Cter in SUMO2). Catalysis depends on glutamate 366, which acts as the Proton donor. Phenylalanine 392 contacts thiamine diphosphate. Histidine 416 and aspartate 424 together coordinate substrate. Thiamine diphosphate is bound at residue glutamine 428. Arginine 474 contributes to the substrate binding site. 2 positions are modified to N6-acetyllysine: lysine 538 and lysine 603.

Belongs to the transketolase family. As to quaternary structure, homodimer. Requires Mg(2+) as cofactor. It depends on Ca(2+) as a cofactor. The cofactor is Mn(2+). Co(2+) serves as cofactor. Thiamine diphosphate is required as a cofactor.

The enzyme catalyses D-sedoheptulose 7-phosphate + D-glyceraldehyde 3-phosphate = aldehydo-D-ribose 5-phosphate + D-xylulose 5-phosphate. Its function is as follows. Catalyzes the transfer of a two-carbon ketol group from a ketose donor to an aldose acceptor, via a covalent intermediate with the cofactor thiamine pyrophosphate. The chain is Transketolase (TKT) from Pongo abelii (Sumatran orangutan).